The following is a 355-amino-acid chain: Protein RecA (355 aa).

Position 72–79 (72–79) interacts with ATP; the sequence is GPESSGKT.

It belongs to the RecA family.

The protein resides in the cytoplasm. Can catalyze the hydrolysis of ATP in the presence of single-stranded DNA, the ATP-dependent uptake of single-stranded DNA by duplex DNA, and the ATP-dependent hybridization of homologous single-stranded DNAs. It interacts with LexA causing its activation and leading to its autocatalytic cleavage. This is Protein RecA from Wolbachia sp. subsp. Drosophila simulans (strain wRi).